The primary structure comprises 207 residues: Probable isochorismatase (207 aa).

The protein belongs to the isochorismatase family.

The enzyme catalyses isochorismate + H2O = (2S,3S)-2,3-dihydroxy-2,3-dihydrobenzoate + pyruvate. It participates in antibiotic biosynthesis; phenazine biosynthesis. Its function is as follows. Involved in the biosynthesis of the antibiotic phenazine, a nitrogen-containing heterocyclic molecule having important roles in virulence, competition and biological control. This isochorismatase may remove pyruvate from chorismate during the formation of the phenazine ring structure and/or stabilize the phenazine biosynthetic complex. The protein is Probable isochorismatase (phzA) of Pseudomonas chlororaphis (Pseudomonas aureofaciens).